The sequence spans 348 residues: GTPase Obg 1 (348 aa).

One can recognise an Obg domain in the interval 1–159; it reads MSFVDEAKIH…HCVLLKLKIV (159 aa). Residues 160–329 form the OBG-type G domain; it reads SDVGIIGMPN…LHAQVKKAVV (170 aa). Residues 166-173, 191-195, 212-215, 279-282, and 310-312 contribute to the GTP site; these read GMPNAGKS, FTTLE, DIPG, NKCD, and GDE. Residues serine 173 and threonine 193 each coordinate Mg(2+).

This sequence belongs to the TRAFAC class OBG-HflX-like GTPase superfamily. OBG GTPase family. Monomer. Mg(2+) serves as cofactor.

The protein localises to the cytoplasm. In terms of biological role, an essential GTPase which binds GTP, GDP and possibly (p)ppGpp with moderate affinity, with high nucleotide exchange rates and a fairly low GTP hydrolysis rate. Plays a role in control of the cell cycle, stress response, ribosome biogenesis and in those bacteria that undergo differentiation, in morphogenesis control. In Anaplasma marginale (strain St. Maries), this protein is GTPase Obg 1.